The chain runs to 119 residues: Beta-2-microglobulin (119 aa).

The signal sequence occupies residues 1–20 (MARFVVAALLVLLSLSGLEA). One can recognise an Ig-like C1-type domain in the interval 25–114 (PKIQVYSRHP…MTFPAPKTVK (90 aa)). Cys-45 and Cys-100 are disulfide-bonded.

Belongs to the beta-2-microglobulin family. In terms of assembly, heterodimer of an alpha chain and a beta chain. Beta-2-microglobulin is the beta-chain of major histocompatibility complex class I molecules.

Its subcellular location is the secreted. Its function is as follows. Component of the class I major histocompatibility complex (MHC). Involved in the presentation of peptide antigens to the immune system. The polypeptide is Beta-2-microglobulin (B2M) (Pithecia irrorata (Gray monk saki)).